Reading from the N-terminus, the 172-residue chain is Putative acetyltransferase YvoF (172 aa).

The protein belongs to the transferase hexapeptide repeat family.

In Bacillus subtilis (strain 168), this protein is Putative acetyltransferase YvoF (yvoF).